The following is a 249-amino-acid chain: uncharacterized protein (249 aa).

7–14 (GKGGCGKS) lines the ATP pocket.

This is an uncharacterized protein from Methanocaldococcus jannaschii (strain ATCC 43067 / DSM 2661 / JAL-1 / JCM 10045 / NBRC 100440) (Methanococcus jannaschii).